The primary structure comprises 417 residues: 4-hydroxy-3-methylbut-2-en-1-yl diphosphate synthase (flavodoxin) (417 aa).

[4Fe-4S] cluster-binding residues include Cys305, Cys308, Cys351, and Glu358.

It belongs to the IspG family. The cofactor is [4Fe-4S] cluster.

It catalyses the reaction (2E)-4-hydroxy-3-methylbut-2-enyl diphosphate + oxidized [flavodoxin] + H2O + 2 H(+) = 2-C-methyl-D-erythritol 2,4-cyclic diphosphate + reduced [flavodoxin]. It functions in the pathway isoprenoid biosynthesis; isopentenyl diphosphate biosynthesis via DXP pathway; isopentenyl diphosphate from 1-deoxy-D-xylulose 5-phosphate: step 5/6. Converts 2C-methyl-D-erythritol 2,4-cyclodiphosphate (ME-2,4cPP) into 1-hydroxy-2-methyl-2-(E)-butenyl 4-diphosphate. The sequence is that of 4-hydroxy-3-methylbut-2-en-1-yl diphosphate synthase (flavodoxin) from Nitrosomonas europaea (strain ATCC 19718 / CIP 103999 / KCTC 2705 / NBRC 14298).